We begin with the raw amino-acid sequence, 506 residues long: Protein MGF 505-9R (506 aa).

Belongs to the asfivirus MGF 505 family.

Functionally, plays a role in virus cell tropism, and may be required for efficient virus replication in macrophages. The sequence is that of Protein MGF 505-9R from Ornithodoros (relapsing fever ticks).